We begin with the raw amino-acid sequence, 252 residues long: MINFSNTLIILNNDVPCELLKKKYSELLIPTIGILDFKKKKIYKKYNNIFLYSYQNYSFLLDLNDNILLKIQKYLNKNGILDINLYLNDKSNNNSGTSKKDHSKIEDINKILKRLRKECLYNGYINISAEQTMSENGIVINIKAENPDFNKSDDDNNLVSSDEEIYEKCEDKKKVVNRVCDNCTCGKKEKAMNLEKIKINDNEVEYNTENVVSSCGNCYLGDAFRCGSCPYKGLPAFQPGENVKLNLNNEQN.

The N-terminal SAM-like domain stretch occupies residues 1–153 (MINFSNTLII…AENPDFNKSD (153 aa)). The interval 153–166 (DDDNNLVSSDEEIY) is linker. Residues Cys-169, Cys-180, Cys-183, and Cys-185 each contribute to the [2Fe-2S] cluster site. The interval 169–185 (CEDKKKVVNRVCDNCTC) is fe-S binding site A. The [4Fe-4S] cluster site is built by Cys-215, Cys-218, Cys-226, and Cys-229. 2 short sequence motifs (cx2C motif) span residues 215-218 (CGNC) and 226-229 (CGSC). The interval 215–229 (CGNCYLGDAFRCGSC) is fe-S binding site B.

The protein belongs to the anamorsin family. Monomer. [2Fe-2S] cluster serves as cofactor. The cofactor is [4Fe-4S] cluster.

It is found in the cytoplasm. The protein resides in the mitochondrion intermembrane space. In terms of biological role, component of the cytosolic iron-sulfur (Fe-S) protein assembly (CIA) machinery. Required for the maturation of extramitochondrial Fe-S proteins. Part of an electron transfer chain functioning in an early step of cytosolic Fe-S biogenesis, facilitating the de novo assembly of a [4Fe-4S] cluster on the cytosolic Fe-S scaffold complex. Electrons are transferred from NADPH via a FAD- and FMN-containing diflavin oxidoreductase. Together with the diflavin oxidoreductase, also required for the assembly of the diferric tyrosyl radical cofactor of ribonucleotide reductase (RNR), probably by providing electrons for reduction during radical cofactor maturation in the catalytic small subunit. In Plasmodium berghei (strain Anka), this protein is Anamorsin homolog (DRE2).